The primary structure comprises 206 residues: Ras-related protein Rab-7b (206 aa).

Position 15–22 (G15–T22) interacts with GTP. Residues S17 and S23 each carry the phosphoserine modification. Residues T34, T40, and T64 each carry the phosphothreonine modification. Residues T34–T40 and D63–Q67 contribute to the GTP site. The Effector region motif lies at Y37–F45. Position 72 is a phosphoserine (S72). A phosphotyrosine mark is found at Y78 and Y88. GTP is bound by residues N125–D128 and A157–K158. 2 S-geranylgeranyl cysteine lipidation sites follow: C205 and C206.

The protein belongs to the small GTPase superfamily. Rab family. Post-translationally, glycosylated.

The protein resides in the cytoplasm. It is found in the cytoskeleton. The protein is Ras-related protein Rab-7b of Paramecium octaurelia.